Here is an 844-residue protein sequence, read N- to C-terminus: MQDISNHTPMIQQYLKIKSQYQDILLFYRMGDFYELFFDDAKKAAELLDITLTARGKSNGESIPMAGVPYHAAEAYIAKIVKKGLSIAICEQTGDPNTSKGPVERQVTRIITPATVSEEAFLDNNQDSILVSIFEKNNKYYLAYTSYTQGKIYLVKTLTSLNELKNTVLKLSPQEIITNSHELAQQNPFKKPIKALEEWYYSNFEAKKYINDSLDTNIANNILNLYKNDQLTTIGSILSYLTNILKDTPRHITDISYEQEQDTLNIDINSRINLELDNNSKSSLLSIIGKCKTSLGSRLLKRYFSNPTRNLNILATRHSIINSLGENQHFLKIQDVLSYISDIERIISRVALGTVKPKDLVALRDSLEQLPILKKLLSEKNTPEITNINNRIHQLDELVTLLDKAIIENPPTTIRDGGVIKEGFDKELDELKSIKDNSYDFLIKFEELQKQKTGISTLKVGYNRVHGYYIELSKQHADKIPTEYVRRQTLKASERYITEELKNFEDKVLSSKEKALAREKLIYDTLLKKVIEYYKQIQETAASIAEIDVLANFAERAIKLKLSQPKFNNLAKLELKEVRHLAIEHNIDEPFIPNDTLLSKDTNTLQIITGPNMGGKSTYMRQVAQLIFLAYIGSFVPASYADICDIDTIYTRIGASDDISSGRSTFMVEMTETAYILNNASAKSLVIMDEIGRGTSTFDGLALAKACAEKFAQIGAFTLFATHYFELTELAKQYPNVCNIHFEAKEYKDNIYFMHKAVTGAAKKSYGIQVAKLAGISQDVLESAKQNLYNLEKKQQLTESTQVQAQFQLEPTTQNPLQQKLDAIDINTITPLEALNILFELKKR.

ATP is bound at residue 610–617; it reads GPNMGGKS.

This sequence belongs to the DNA mismatch repair MutS family.

In terms of biological role, this protein is involved in the repair of mismatches in DNA. It is possible that it carries out the mismatch recognition step. This protein has a weak ATPase activity. This is DNA mismatch repair protein MutS from Francisella tularensis subsp. tularensis (strain WY96-3418).